A 262-amino-acid polypeptide reads, in one-letter code: Thiazole synthase (262 aa).

The active-site Schiff-base intermediate with DXP is Lys96. 1-deoxy-D-xylulose 5-phosphate-binding positions include Gly157, 184–185 (AG), and 206–207 (NT).

Belongs to the ThiG family. Homotetramer. Forms heterodimers with either ThiH or ThiS.

The protein resides in the cytoplasm. The enzyme catalyses [ThiS sulfur-carrier protein]-C-terminal-Gly-aminoethanethioate + 2-iminoacetate + 1-deoxy-D-xylulose 5-phosphate = [ThiS sulfur-carrier protein]-C-terminal Gly-Gly + 2-[(2R,5Z)-2-carboxy-4-methylthiazol-5(2H)-ylidene]ethyl phosphate + 2 H2O + H(+). Its pathway is cofactor biosynthesis; thiamine diphosphate biosynthesis. Catalyzes the rearrangement of 1-deoxy-D-xylulose 5-phosphate (DXP) to produce the thiazole phosphate moiety of thiamine. Sulfur is provided by the thiocarboxylate moiety of the carrier protein ThiS. In vitro, sulfur can be provided by H(2)S. In Legionella pneumophila (strain Lens), this protein is Thiazole synthase.